The primary structure comprises 148 residues: Large ribosomal subunit protein bL9 (148 aa).

This sequence belongs to the bacterial ribosomal protein bL9 family.

Binds to the 23S rRNA. This chain is Large ribosomal subunit protein bL9, found in Hahella chejuensis (strain KCTC 2396).